A 352-amino-acid polypeptide reads, in one-letter code: Biotin synthase (352 aa).

The 219-residue stretch at 44–262 (NRVQVSTLLS…LAVARILMPK (219 aa)) folds into the Radical SAM core domain. [4Fe-4S] cluster-binding residues include C59, C63, and C66. Positions 103, 134, 194, and 266 each coordinate [2Fe-2S] cluster.

Belongs to the radical SAM superfamily. Biotin synthase family. As to quaternary structure, homodimer. The cofactor is [4Fe-4S] cluster. Requires [2Fe-2S] cluster as cofactor.

It carries out the reaction (4R,5S)-dethiobiotin + (sulfur carrier)-SH + 2 reduced [2Fe-2S]-[ferredoxin] + 2 S-adenosyl-L-methionine = (sulfur carrier)-H + biotin + 2 5'-deoxyadenosine + 2 L-methionine + 2 oxidized [2Fe-2S]-[ferredoxin]. Its pathway is cofactor biosynthesis; biotin biosynthesis; biotin from 7,8-diaminononanoate: step 2/2. Functionally, catalyzes the conversion of dethiobiotin (DTB) to biotin by the insertion of a sulfur atom into dethiobiotin via a radical-based mechanism. This Pseudomonas entomophila (strain L48) protein is Biotin synthase.